Reading from the N-terminus, the 1399-residue chain is DNA-directed RNA polymerase subunit beta' (1399 aa).

Residues Cys-70, Cys-72, Cys-85, and Cys-88 each coordinate Zn(2+). Asp-460, Asp-462, and Asp-464 together coordinate Mg(2+). Cys-814, Cys-888, Cys-895, and Cys-898 together coordinate Zn(2+).

Belongs to the RNA polymerase beta' chain family. As to quaternary structure, the RNAP catalytic core consists of 2 alpha, 1 beta, 1 beta' and 1 omega subunit. When a sigma factor is associated with the core the holoenzyme is formed, which can initiate transcription. Mg(2+) is required as a cofactor. Zn(2+) serves as cofactor.

The enzyme catalyses RNA(n) + a ribonucleoside 5'-triphosphate = RNA(n+1) + diphosphate. Functionally, DNA-dependent RNA polymerase catalyzes the transcription of DNA into RNA using the four ribonucleoside triphosphates as substrates. The polypeptide is DNA-directed RNA polymerase subunit beta' (Pseudomonas fluorescens (strain Pf0-1)).